The chain runs to 543 residues: Fiber protein (543 aa).

Residues 1 to 36 (MKRTRRSLPANFDPVYPYDAPKPSTQPPFFNDRKGL) form a disordered region.

This sequence belongs to the adenoviridae fiber family. In terms of assembly, homotrimer. Interacts (via N-terminal tail region) with pentons.

The protein localises to the virion. It localises to the host nucleus. Forms spikes that protrude from each vertex of the icosahedral capsid. Interacts with host receptor to provide virion initial attachment to target cell. Fiber proteins are shed during virus entry, when virus is still at the cell surface. This chain is Fiber protein, found in Canine adenovirus serotype 1 (strain CLL) (CAdV-1).